We begin with the raw amino-acid sequence, 340 residues long: Fructose import permease protein FruG (340 aa).

9 helical membrane-spanning segments follow: residues 23 to 43, 49 to 69, 73 to 93, 101 to 121, 130 to 150, 182 to 202, 234 to 254, 273 to 293, and 307 to 327; these read IPTLAAVVIFILMIIMGQALF, LGFISSLFIDHAYLIILAVAM, ILTGGIDLSVGAIVAITAVVG, VPAFLVMIIMLLIGAVFGLLA, MQPFIATLSTMFLARGLASII, LSFNVGVIIALVVVVFGYVFL, IIYLTSATLAALASIVYTANI, VVIGGTIITGGFGYVLGSVLG, and FGVPAEWTTIVIGLMILVFVV.

This sequence belongs to the binding-protein-dependent transport system permease family. As to quaternary structure, the complex is composed of an ATP-binding protein (FruK), two transmembrane proteins (FruF and FruG) and a solute-binding protein (FruE).

It is found in the cell membrane. Part of the high-affinity ABC transporter complex FruEKFG involved in fructose uptake. Can also transport ribose and xylose, with lower affinity. Probably responsible for the translocation of the substrate across the membrane. The chain is Fructose import permease protein FruG from Bifidobacterium longum (strain NCC 2705).